Here is a 233-residue protein sequence, read N- to C-terminus: Octanoyltransferase (233 aa).

The region spanning 32–213 (NNIDGILLLL…NFKMIFETDL (182 aa)) is the BPL/LPL catalytic domain. Residues 77–84 (RGGNVTYH), 144–146 (AIG), and 157–159 (GFA) each bind substrate. Cysteine 175 (acyl-thioester intermediate) is an active-site residue.

It belongs to the LipB family.

It localises to the cytoplasm. The enzyme catalyses octanoyl-[ACP] + L-lysyl-[protein] = N(6)-octanoyl-L-lysyl-[protein] + holo-[ACP] + H(+). It functions in the pathway protein modification; protein lipoylation via endogenous pathway; protein N(6)-(lipoyl)lysine from octanoyl-[acyl-carrier-protein]: step 1/2. Catalyzes the transfer of endogenously produced octanoic acid from octanoyl-acyl-carrier-protein onto the lipoyl domains of lipoate-dependent enzymes. Lipoyl-ACP can also act as a substrate although octanoyl-ACP is likely to be the physiological substrate. The polypeptide is Octanoyltransferase (Clostridium kluyveri (strain ATCC 8527 / DSM 555 / NBRC 12016 / NCIMB 10680 / K1)).